Here is a 240-residue protein sequence, read N- to C-terminus: UDP-2,3-diacylglucosamine hydrolase (240 aa).

Mn(2+) contacts are provided by aspartate 8, histidine 10, aspartate 41, asparagine 79, and histidine 114. 79–80 serves as a coordination point for substrate; that stretch reads NR. Aspartate 122, serine 160, asparagine 164, lysine 167, and histidine 195 together coordinate substrate. Residues histidine 195 and histidine 197 each coordinate Mn(2+).

It belongs to the LpxH family. Mn(2+) serves as cofactor.

It is found in the cell inner membrane. It catalyses the reaction UDP-2-N,3-O-bis[(3R)-3-hydroxytetradecanoyl]-alpha-D-glucosamine + H2O = 2-N,3-O-bis[(3R)-3-hydroxytetradecanoyl]-alpha-D-glucosaminyl 1-phosphate + UMP + 2 H(+). It functions in the pathway glycolipid biosynthesis; lipid IV(A) biosynthesis; lipid IV(A) from (3R)-3-hydroxytetradecanoyl-[acyl-carrier-protein] and UDP-N-acetyl-alpha-D-glucosamine: step 4/6. In terms of biological role, hydrolyzes the pyrophosphate bond of UDP-2,3-diacylglucosamine to yield 2,3-diacylglucosamine 1-phosphate (lipid X) and UMP by catalyzing the attack of water at the alpha-P atom. Involved in the biosynthesis of lipid A, a phosphorylated glycolipid that anchors the lipopolysaccharide to the outer membrane of the cell. The protein is UDP-2,3-diacylglucosamine hydrolase of Proteus mirabilis (strain HI4320).